The primary structure comprises 215 residues: Pyridoxine/pyridoxamine 5'-phosphate oxidase (215 aa).

Substrate contacts are provided by residues 11–14 (RRDY) and Lys-69. FMN-binding positions include 64-69 (RVVLLK), 79-80 (YT), Lys-86, and Gln-108. Substrate-binding residues include Tyr-126, Arg-130, and Ser-134. FMN contacts are provided by residues 143 to 144 (QS) and Trp-188. 194–196 (RLH) is a substrate binding site. FMN is bound at residue Arg-198.

The protein belongs to the pyridoxamine 5'-phosphate oxidase family. As to quaternary structure, homodimer. FMN serves as cofactor.

The enzyme catalyses pyridoxamine 5'-phosphate + O2 + H2O = pyridoxal 5'-phosphate + H2O2 + NH4(+). It carries out the reaction pyridoxine 5'-phosphate + O2 = pyridoxal 5'-phosphate + H2O2. Its pathway is cofactor metabolism; pyridoxal 5'-phosphate salvage; pyridoxal 5'-phosphate from pyridoxamine 5'-phosphate: step 1/1. It participates in cofactor metabolism; pyridoxal 5'-phosphate salvage; pyridoxal 5'-phosphate from pyridoxine 5'-phosphate: step 1/1. Catalyzes the oxidation of either pyridoxine 5'-phosphate (PNP) or pyridoxamine 5'-phosphate (PMP) into pyridoxal 5'-phosphate (PLP). The protein is Pyridoxine/pyridoxamine 5'-phosphate oxidase of Legionella pneumophila (strain Paris).